The chain runs to 1439 residues: Microtubule organization protein AKNA (1439 aa).

2 stretches are compositionally biased toward basic and acidic residues: residues 1–10 and 25–35; these read MASSETEIRW and AWAEDKRDVDR. A disordered region spans residues 1–394; that stretch reads MASSETEIRW…NRKPQAPARP (394 aa). At Ser-52 the chain carries Phosphoserine. The span at 71-83 shows a compositional bias: basic and acidic residues; it reads WDPHPQPDGHQDS. Positions 89-99 are enriched in acidic residues; it reads SGEEAEAEDVD. A compositionally biased stretch (polar residues) spans 263-275; sequence QDSSAPPAQSPQH. Basic and acidic residues predominate over residues 276-285; it reads ATDRWRRETT. Phosphoserine is present on residues Ser-316, Ser-499, and Ser-534. 2 disordered regions span residues 507–562 and 659–682; these read SAEW…SAEQ and IDQT…PALP. Residues 533 to 544 show a composition bias toward low complexity; that stretch reads LSPSSLTSMPTL. Ser-767 and Ser-770 each carry phosphoserine. Residues 771–804 form a PEST region; that stretch reads LPEAMRMEEEEEGEEEEEEEGGGDSLEVDGVAAT. Disordered regions lie at residues 775–942 and 977–1005; these read MRME…QTPE and IPRR…LRQR. Positions 778–792 are enriched in acidic residues; the sequence is EEEEEGEEEEEEEGG. Ser-848 is subject to Phosphoserine. Pro residues predominate over residues 865–875; sequence PPGPGVPPHPP. 3 stretches are compositionally biased toward polar residues: residues 879-891, 929-940, and 983-999; these read SAAS…TSLE, SETSRVSPLTQT, and EPST…SSPS. Ser-886 is modified (phosphoserine). The PEST stretch occupies residues 911–932; that stretch reads HLEETWMASPETDSGFVGSETS. A phosphoserine mark is found at Ser-997 and Ser-1010. Positions 1095 to 1165 are disordered; the sequence is LHQPLQGSPT…RARSSSVPRE (71 aa). Positions 1115–1123 form a DNA-binding region, a.T hook; that stretch reads RTRGRPADS. Over residues 1135-1147 the composition is skewed to basic and acidic residues; sequence STERLPGEPRGEE. Phosphoserine occurs at positions 1172 and 1173. Residues 1180 to 1211 are disordered; sequence LPLFSEKSKTTKDSPQAARDGKRGVGSAGWPD. Position 1228 is a phosphoserine (Ser-1228). The disordered stretch occupies residues 1252–1329; the sequence is AGGAVTGDPL…RPPPGLWYLA (78 aa). Positions 1303–1317 are enriched in polar residues; sequence SSTPSPKQRSKQAGS. A phosphoserine mark is found at Ser-1377, Ser-1387, and Ser-1424.

The protein belongs to the AKNA family. In terms of assembly, interacts with DCTN1. Interacts with MAPRE1/EB1. Interacts with ODF2. Interacts with CAMSAP3. In terms of processing, phosphorylated; phosphorylation regulates dissociation from and reassembly at the centrosome. Predominantly expressed by lymphoid tissues. Highly expressed in the spleen, lymph nodes and peripheral blood leukocytes, expressed at lower level in the thymus. Mainly expressed by germinal center B-lymphocytes, a stage in which receptor and ligand interactions are crucial for B-lymphocyte maturation. Expressed by B- and T-lymphocytes, Natural killer cells and CD1a(+)CD14(-) but not CD1a(-)CD14(+) dendritic cells. Weakly or not expressed in fetal liver and in adult bone marrow.

It localises to the cytoplasm. The protein resides in the cytoskeleton. Its subcellular location is the microtubule organizing center. The protein localises to the centrosome. It is found in the centriole. It localises to the nucleus. Its function is as follows. Centrosomal protein that plays a key role in cell delamination by regulating microtubule organization. Required for the delamination and retention of neural stem cells from the subventricular zone during neurogenesis. Also regulates the epithelial-to-mesenchymal transition in other epithelial cells. Acts by increasing centrosomal microtubule nucleation and recruiting nucleation factors and minus-end stabilizers, thereby destabilizing microtubules at the adherens junctions and mediating constriction of the apical endfoot. In addition, may also act as a transcription factor that specifically activates the expression of the CD40 receptor and its ligand CD40L/CD154, two cell surface molecules on lymphocytes that are critical for antigen-dependent-B-cell development. Binds to A/T-rich promoters. It is unclear how it can both act as a microtubule organizer and as a transcription factor; additional evidences are required to reconcile these two apparently contradictory functions. In Homo sapiens (Human), this protein is Microtubule organization protein AKNA.